The following is a 188-amino-acid chain: FMN-dependent NADPH-azoreductase (188 aa).

The protein belongs to the azoreductase type 2 family. In terms of assembly, homotetramer. FMN is required as a cofactor.

In terms of biological role, catalyzes the reductive cleavage of azo bond in aromatic azo compounds to the corresponding amines. Requires NADPH, but not NADH, as an electron donor for its activity. The sequence is that of FMN-dependent NADPH-azoreductase (azo1) from Staphylococcus epidermidis (strain ATCC 12228 / FDA PCI 1200).